Here is a 500-residue protein sequence, read N- to C-terminus: Histidine--tRNA ligase (500 aa).

This sequence belongs to the class-II aminoacyl-tRNA synthetase family. Homodimer.

The protein resides in the cytoplasm. The catalysed reaction is tRNA(His) + L-histidine + ATP = L-histidyl-tRNA(His) + AMP + diphosphate + H(+). The polypeptide is Histidine--tRNA ligase (Ruegeria sp. (strain TM1040) (Silicibacter sp.)).